We begin with the raw amino-acid sequence, 769 residues long: MGCNMCVVQKPEEQYKVMLQVNGKELSKLSQEQTLQALRSSKEPLVIQVLRRSPRLRGDSSCHDLQLVDSGTQTDITFEHIMALGKLRPPTPPMVILEPPPISHEYYDPAEFMEGGPQEADRLDELEYEEVELYKSSHRDKLGLMVCYRTDDEEDLGIYVGEVNPNSIAAKDGRIREGDRIIQINGVDVQNREEAVAILSQEENTNISLLVARPESQLAKRWKDSDRDDFLDDFGSENEGELRARKLKSPPAQQPGNEEEKGAPDAGPGLSNSQELDSGVGRTDESTRNEESSEHDLLGDEPPSSTNTPGSLRKFGLQGDALQSRDFHFSMDSLLAEGAGLGGGDVPGLTDEEYERYRELLEIKCHLENGNQLGLLFPRASGGNSALDVNRNESLGHEMAMLEEELRHLEFKCRNILRAQKMQQLRERCMKAWLLEEESLYDLAASEPKKHELSDISELPEKSDKDSTSAYNTGESCRSTPLLVEPLPESPLRRAMAGNSNLNRTPPGPAVATPAKAAPPPGSPAKFRSLSRDPEAGRRQHAEERGRRNPKTGLTLERVGPESSPYLSRRHRGQGQEGEHYHSCVQLAPTRGLEELGHGPLSLAGGPRVGGVAAAATEAPRMEWKVKVRSDGTRYVAKRPVRDRLLKARALKIREERSGMTTDDDAVSEMKMGRYWSKEERKQHLIRAREQRKRREFMMQSRLECLREQQNGDSKPELNIIALSHRKTMKKRNKKILDNWITIQEMLAHGARSADGKRVYNPLLSVTTV.

The PDZ domain maps to 130-214 (EVELYKSSHR…TNISLLVARP (85 aa)). Residues 221–315 (RWKDSDRDDF…TNTPGSLRKF (95 aa)) are disordered. The span at 229–239 (DFLDDFGSENE) shows a compositional bias: acidic residues. S236 carries the phosphoserine modification. Basic and acidic residues predominate over residues 282–298 (RTDESTRNEESSEHDLL). Residues 389 to 419 (VNRNESLGHEMAMLEEELRHLEFKCRNILRA) are a coiled coil. The tract at residues 445–579 (ASEPKKHELS…RHRGQGQEGE (135 aa)) is disordered. A compositionally biased stretch (basic and acidic residues) spans 447–467 (EPKKHELSDISELPEKSDKDS). Residue S454 is modified to Phosphoserine. Residues 468-479 (TSAYNTGESCRS) are compositionally biased toward polar residues. Basic and acidic residues predominate over residues 530-547 (LSRDPEAGRRQHAEERGR).

Brain-specific. Expressed in fetal and adult brain. Up-regulated in synovial carcinomas.

The protein resides in the cytoplasm. It localises to the cell cortex. The polypeptide is PDZ domain-containing protein 4 (PDZD4) (Homo sapiens (Human)).